A 179-amino-acid chain; its full sequence is Large ribosomal subunit protein uL5 (179 aa).

It belongs to the universal ribosomal protein uL5 family. Part of the 50S ribosomal subunit; part of the 5S rRNA/L5/L18/L25 subcomplex. Contacts the 5S rRNA and the P site tRNA. Forms a bridge to the 30S subunit in the 70S ribosome.

Its function is as follows. This is one of the proteins that bind and probably mediate the attachment of the 5S RNA into the large ribosomal subunit, where it forms part of the central protuberance. In the 70S ribosome it contacts protein S13 of the 30S subunit (bridge B1b), connecting the 2 subunits; this bridge is implicated in subunit movement. Contacts the P site tRNA; the 5S rRNA and some of its associated proteins might help stabilize positioning of ribosome-bound tRNAs. This Klebsiella pneumoniae (strain 342) protein is Large ribosomal subunit protein uL5.